The primary structure comprises 1265 residues: Methionine synthase (1265 aa).

The 320-residue stretch at 19–338 (QDEIEAILQE…DHIREIAEAV (320 aa)) folds into the Hcy-binding domain. Zn(2+)-binding residues include Cys-260, Cys-323, and Cys-324. Residues 371 to 632 (FVNIGERCNV…IHKELLQLCE (262 aa)) enclose the Pterin-binding domain. (6S)-5,6,7,8-tetrahydrofolate is bound by residues 382 to 384 (GSR), Asp-449, Asn-470, Asp-537, Asn-579, Arg-585, and Arg-591. The region spanning 662–759 (QTDEWRNGPL…FMEKEREETK (98 aa)) is the B12-binding N-terminal domain. Methylcob(III)alamin-binding positions include Glu-709, 782–786 (GDVHD), His-785, Ser-830, Thr-834, and Ala-886. The B12-binding domain occupies 772 to 907 (QGTIVLATVK…DENLKDEYFE (136 aa)). The region spanning 923–1265 (SLKERRYLTL…LGPILGYDTD (343 aa)) is the AdoMet activation domain. S-adenosyl-L-methionine contacts are provided by residues Asp-974, Arg-1172, and 1227–1228 (YF). A Phosphothreonine modification is found at Thr-1264.

The protein belongs to the vitamin-B12 dependent methionine synthase family. In terms of assembly, monomer. Dimer. Forms a multiprotein complex with MMACHC, MMADHC and MTRR. Methylcob(III)alamin serves as cofactor. The cofactor is Zn(2+).

It localises to the cytoplasm. It catalyses the reaction (6S)-5-methyl-5,6,7,8-tetrahydrofolate + L-homocysteine = (6S)-5,6,7,8-tetrahydrofolate + L-methionine. The protein operates within amino-acid biosynthesis; L-methionine biosynthesis via de novo pathway; L-methionine from L-homocysteine (MetH route): step 1/1. Its function is as follows. Catalyzes the transfer of a methyl group from methylcob(III)alamin (MeCbl) to homocysteine, yielding enzyme-bound cob(I)alamin and methionine in the cytosol. MeCbl is an active form of cobalamin (vitamin B12) used as a cofactor for methionine biosynthesis. Cob(I)alamin form is regenerated to MeCbl by a transfer of a methyl group from 5-methyltetrahydrofolate. The processing of cobalamin in the cytosol occurs in a multiprotein complex composed of at least MMACHC, MMADHC, MTRR (methionine synthase reductase) and MTR which may contribute to shuttle safely and efficiently cobalamin towards MTR in order to produce methionine. The polypeptide is Methionine synthase (MTR) (Bos taurus (Bovine)).